We begin with the raw amino-acid sequence, 817 residues long: Cargo-transport protein YPP1 (817 aa).

This sequence belongs to the YPP1 family. Interacts with STT4 and ribosomes.

It is found in the cytoplasmic granule. The protein localises to the cell membrane. In terms of biological role, involved in endocytosis. The sequence is that of Cargo-transport protein YPP1 (YPP1) from Saccharomyces cerevisiae (strain YJM789) (Baker's yeast).